The chain runs to 324 residues: Protein SRC2 homolog (324 aa).

In terms of domain architecture, C2 spans 1–111; it reads MECRSLDLTI…LDQNKGDEEK (111 aa). Topologically, residues 1–279 are cytoplasmic; that stretch reads MECRSLDLTI…KPQKPKKHGK (279 aa). Positions 141 to 281 are disordered; it reads GSSSGPHAPV…QKPKKHGKAG (141 aa). 2 stretches are compositionally biased toward low complexity: residues 166 to 175 and 246 to 269; these read YPPGHGAPSA and PYGY…QAHG. Positions 270–279 are enriched in basic residues; that stretch reads KPQKPKKHGK. The chain crosses the membrane as a helical; Signal-anchor span at residues 280–300; the sequence is AGAGMGLGLGLGAGLLGGLLV. Over 301–324 the chain is Lumenal; it reads GEAVSDIADMGDMGDMGDMGGFDF.

Interacts with RBOHF (via N-terminus).

It localises to the endoplasmic reticulum membrane. It is found in the protein storage vacuole membrane. The protein resides in the cell membrane. Functionally, may act as an activator of the calcium-dependent activation of RBOHF that mediates reactive oxygen species (ROS) production and may play a role in cold responses. The polypeptide is Protein SRC2 homolog (Arabidopsis thaliana (Mouse-ear cress)).